Reading from the N-terminus, the 264-residue chain is tRNA pseudouridine synthase A (264 aa).

Asp51 serves as the catalytic Nucleophile. Position 109 (Tyr109) interacts with substrate.

It belongs to the tRNA pseudouridine synthase TruA family. Homodimer.

The enzyme catalyses uridine(38/39/40) in tRNA = pseudouridine(38/39/40) in tRNA. Its function is as follows. Formation of pseudouridine at positions 38, 39 and 40 in the anticodon stem and loop of transfer RNAs. The protein is tRNA pseudouridine synthase A of Vibrio parahaemolyticus serotype O3:K6 (strain RIMD 2210633).